Here is a 180-residue protein sequence, read N- to C-terminus: Acireductone dioxygenase (180 aa).

Residues His97, His99, Glu103, and His141 each coordinate Fe(2+). Positions 97, 99, 103, and 141 each coordinate Ni(2+).

The protein belongs to the acireductone dioxygenase (ARD) family. Monomer. Requires Fe(2+) as cofactor. Ni(2+) serves as cofactor.

The catalysed reaction is 1,2-dihydroxy-5-(methylsulfanyl)pent-1-en-3-one + O2 = 3-(methylsulfanyl)propanoate + CO + formate + 2 H(+). The enzyme catalyses 1,2-dihydroxy-5-(methylsulfanyl)pent-1-en-3-one + O2 = 4-methylsulfanyl-2-oxobutanoate + formate + 2 H(+). Its pathway is amino-acid biosynthesis; L-methionine biosynthesis via salvage pathway; L-methionine from S-methyl-5-thio-alpha-D-ribose 1-phosphate: step 5/6. In terms of biological role, catalyzes 2 different reactions between oxygen and the acireductone 1,2-dihydroxy-3-keto-5-methylthiopentene (DHK-MTPene) depending upon the metal bound in the active site. Fe-containing acireductone dioxygenase (Fe-ARD) produces formate and 2-keto-4-methylthiobutyrate (KMTB), the alpha-ketoacid precursor of methionine in the methionine recycle pathway. Ni-containing acireductone dioxygenase (Ni-ARD) produces methylthiopropionate, carbon monoxide and formate, and does not lie on the methionine recycle pathway. This is Acireductone dioxygenase from Enterobacter sp. (strain 638).